A 714-amino-acid chain; its full sequence is WD repeat and coiled-coil-containing protein (714 aa).

WD repeat units lie at residues 55–98 and 154–194; these read GQFE…LEQN and KGSG…LVPC. Disordered regions lie at residues 432–454 and 531–564; these read EESTTKSESPSQHHGIRRHSENF and QASRDSSRPCSPRYETSEKLYSDATPPKNSKEKN. A coiled-coil region spans residues 567–595; it reads QLTQNMERIFTRFAEVQQCLSEIREFTQN. The interval 685 to 714 is disordered; that stretch reads RSARRKSPARPPSGADDFPPESPKSPSMEK.

This Danio rerio (Zebrafish) protein is WD repeat and coiled-coil-containing protein (wdcp).